The following is a 215-amino-acid chain: ATP phosphoribosyltransferase (215 aa).

It belongs to the ATP phosphoribosyltransferase family. Short subfamily. In terms of assembly, heteromultimer composed of HisG and HisZ subunits.

It localises to the cytoplasm. It catalyses the reaction 1-(5-phospho-beta-D-ribosyl)-ATP + diphosphate = 5-phospho-alpha-D-ribose 1-diphosphate + ATP. The protein operates within amino-acid biosynthesis; L-histidine biosynthesis; L-histidine from 5-phospho-alpha-D-ribose 1-diphosphate: step 1/9. In terms of biological role, catalyzes the condensation of ATP and 5-phosphoribose 1-diphosphate to form N'-(5'-phosphoribosyl)-ATP (PR-ATP). Has a crucial role in the pathway because the rate of histidine biosynthesis seems to be controlled primarily by regulation of HisG enzymatic activity. This Cyanothece sp. (strain PCC 7425 / ATCC 29141) protein is ATP phosphoribosyltransferase.